A 1422-amino-acid polypeptide reads, in one-letter code: Cardiac-enriched FHL2-interacting protein (1422 aa).

Positions 1–23 are disordered; sequence MQGNKKCADGFSDTSSIGSVLDE. Thr119 is subject to Phosphothreonine. 9 disordered regions span residues 151-177, 199-265, 279-443, 459-500, 516-718, 731-850, 877-1127, 1142-1244, and 1353-1422; these read RTEA…KFAH, AGVS…GRGK, SAFE…SSPF, LETS…KAPS, YSPL…SDSQ, FSTS…TNKH, VSSE…HLER, TGAA…GWEP, and RQGS…EGVS. Over residues 201–210 the composition is skewed to polar residues; that stretch reads VSSTHQSSHQ. 2 stretches are compositionally biased toward basic and acidic residues: residues 284-298 and 305-315; these read WDAH…KDIT and KAPKHYEDMPL. The residue at position 327 (Ser327) is a Phosphoserine. A compositionally biased stretch (polar residues) spans 342-351; it reads SPSGIQSTSG. Over residues 395–405 the composition is skewed to basic and acidic residues; sequence GPHDASEDKKQ. The span at 461–470 shows a compositional bias: polar residues; it reads TSDTQPVETS. Phosphoserine is present on Ser472. Basic and acidic residues-rich tracts occupy residues 481 to 495, 524 to 537, and 579 to 588; these read QEKE…DSYK, GFDE…DGKQ, and PAMDSRESFA. Positions 590-606 are enriched in low complexity; that stretch reads SHPTFSSPSASSKTHFS. Composition is skewed to basic and acidic residues over residues 611-622, 635-644, and 653-675; these read AAERNSHEKEEA, WHPDSRENLP, and CNRD…EKRL. Over residues 731–744 the composition is skewed to low complexity; the sequence is FSTSSSDQSFASFE. The span at 790 to 801 shows a compositional bias: basic and acidic residues; the sequence is GVEEHRQKETQR. At Ser815 the chain carries Phosphoserine. Positions 828-839 are enriched in basic and acidic residues; sequence ADKDTALSHAKD. Polar residues-rich tracts occupy residues 907–926 and 944–954; these read SESQ…STEQ and QDETSQQTRKG. Over residues 975 to 991 the composition is skewed to basic and acidic residues; the sequence is ADERLAHEKSRSADSGK. Positions 1048–1067 are enriched in polar residues; sequence AATSPNPSSLGGSSTCSPAA. The span at 1087–1099 shows a compositional bias: pro residues; it reads PPGPGPWASPGPS. The segment covering 1173-1184 has biased composition (basic residues); the sequence is RRAKKLASKRRK. Residues 1185 to 1202 show a composition bias toward basic and acidic residues; that stretch reads SDQMSEKHTEAWEGKSFT. Residues 1353-1366 show a composition bias toward polar residues; sequence RQGSSHRPQSSQGA. The span at 1411 to 1422 shows a compositional bias: acidic residues; it reads DDLEDFATEGVS.

As to quaternary structure, interacts with FHL2.

It localises to the cytoplasm. Its subcellular location is the myofibril. The protein localises to the sarcomere. It is found in the z line. In terms of biological role, plays an important role in cardiomyocyte hypertrophy via activation of the calcineurin/NFAT signaling pathway. This is Cardiac-enriched FHL2-interacting protein from Rattus norvegicus (Rat).